We begin with the raw amino-acid sequence, 443 residues long: Probable glycine dehydrogenase (decarboxylating) subunit 1 (443 aa).

This sequence belongs to the GcvP family. N-terminal subunit subfamily. The glycine cleavage system is composed of four proteins: P, T, L and H. In this organism, the P 'protein' is a heterodimer of two subunits.

It catalyses the reaction N(6)-[(R)-lipoyl]-L-lysyl-[glycine-cleavage complex H protein] + glycine + H(+) = N(6)-[(R)-S(8)-aminomethyldihydrolipoyl]-L-lysyl-[glycine-cleavage complex H protein] + CO2. Its function is as follows. The glycine cleavage system catalyzes the degradation of glycine. The P protein binds the alpha-amino group of glycine through its pyridoxal phosphate cofactor; CO(2) is released and the remaining methylamine moiety is then transferred to the lipoamide cofactor of the H protein. This chain is Probable glycine dehydrogenase (decarboxylating) subunit 1, found in Oleidesulfovibrio alaskensis (strain ATCC BAA-1058 / DSM 17464 / G20) (Desulfovibrio alaskensis).